Here is a 157-residue protein sequence, read N- to C-terminus: Protein-export protein SecB (157 aa).

The protein belongs to the SecB family. As to quaternary structure, homotetramer, a dimer of dimers. One homotetramer interacts with 1 SecA dimer.

The protein localises to the cytoplasm. One of the proteins required for the normal export of preproteins out of the cell cytoplasm. It is a molecular chaperone that binds to a subset of precursor proteins, maintaining them in a translocation-competent state. It also specifically binds to its receptor SecA. The chain is Protein-export protein SecB from Photobacterium profundum (strain SS9).